Reading from the N-terminus, the 312-residue chain is Malate dehydrogenase (312 aa).

Residues 7–13 (GAAGGIG) and Asp34 each bind NAD(+). Substrate-binding residues include Arg81 and Arg87. NAD(+) is bound by residues Asn94 and 117–119 (ITN). Substrate-binding residues include Asn119 and Arg153. The active-site Proton acceptor is His177. Met227 is a binding site for NAD(+).

The protein belongs to the LDH/MDH superfamily. MDH type 1 family. As to quaternary structure, homodimer.

The catalysed reaction is (S)-malate + NAD(+) = oxaloacetate + NADH + H(+). In terms of biological role, catalyzes the reversible oxidation of malate to oxaloacetate. The sequence is that of Malate dehydrogenase from Salmonella dublin (strain CT_02021853).